A 730-amino-acid chain; its full sequence is Elongation factor 2 (730 aa).

In terms of domain architecture, tr-type G spans 19–260 (VMIRNIAIIA…MVIRFLPSPI (242 aa)). Residues 28–35 (AHIDHGKT), 94–98 (DTPGH), and 148–151 (NKVD) contribute to the GTP site. Histidine 596 bears the Diphthamide mark.

Belongs to the TRAFAC class translation factor GTPase superfamily. Classic translation factor GTPase family. EF-G/EF-2 subfamily.

The protein resides in the cytoplasm. Its function is as follows. Catalyzes the GTP-dependent ribosomal translocation step during translation elongation. During this step, the ribosome changes from the pre-translocational (PRE) to the post-translocational (POST) state as the newly formed A-site-bound peptidyl-tRNA and P-site-bound deacylated tRNA move to the P and E sites, respectively. Catalyzes the coordinated movement of the two tRNA molecules, the mRNA and conformational changes in the ribosome. In Methanococcoides methylutens, this protein is Elongation factor 2 (fusA).